Reading from the N-terminus, the 174-residue chain is UPF0340 protein SAHV_2098 (174 aa).

The protein belongs to the UPF0340 family.

The protein is UPF0340 protein SAHV_2098 of Staphylococcus aureus (strain Mu3 / ATCC 700698).